Reading from the N-terminus, the 153-residue chain is Sperm surface protein Sp17 (153 aa).

Positions 74–117 (FKVPSGATESKEAPPEKSEPEKETPQEVVKEQETQVSFVEEVST) are disordered. Positions 82 to 106 (ESKEAPPEKSEPEKETPQEVVKEQE) are enriched in basic and acidic residues. Positions 122 to 151 (AAAAAVKIQAAFRGHKARKEVKIMKESSIE) constitute an IQ domain.

In terms of assembly, homodimer. May interact with ROPN1. Testis- and sperm-specific.

It localises to the membrane. Sperm surface zona pellucida binding protein. Helps to bind spermatozoa to the zona pellucida with high affinity. Might function in binding zona pellucida and carbohydrates. This chain is Sperm surface protein Sp17 (SPA17), found in Notamacropus eugenii (Tammar wallaby).